We begin with the raw amino-acid sequence, 462 residues long: Cysteine proteinase RD21A (462 aa).

A signal peptide spans M1–A21. The propeptide at V22–E136 is activation peptide. N-linked (GlcNAc...) asparagine glycosylation is present at N90. 5 cysteine pairs are disulfide-bonded: C158/C200, C192/C233, C291/C342, C375/C387, and C381/C402. Residue C161 is part of the active site. Catalysis depends on residues H297 and N317. Residues K353–A462 constitute a propeptide, removed in mature form. Residue N414 is glycosylated (N-linked (GlcNAc...) asparagine).

The protein belongs to the peptidase C1 family. As to quaternary structure, interacts with SERPIN1. Interacts with PRN2. Interacts with WSCP. Interacts with TZF4, TZF5 and TZF6.

The protein localises to the vacuole. It localises to the golgi apparatus. The protein resides in the cytoplasm. Its subcellular location is the stress granule. It is found in the P-body. Its activity is regulated as follows. Inhibited by the cysteine protease inhibitor E64 (L-trans-epoxysuccinyl-leucylamide-(4-guanido)-butane). Functionally, cysteine protease that plays a role in immunity, senescence, and biotic and abiotic stresses. Involved in immunity against the necrotrophic fungal pathogen Botrytis cinerea. Involved in elicitor-stimulated programmed cell death (PCD). During infection by the necrotrophic fungal pathogen Botrytis cinerea, functions as a PCD-promoting protease that is released from the ER body or vacuole to the cytoplasm. Accumulates in endoplasmic reticulum-derived bodies in epidermal cells and may participate in cell death in stressed or injured cells. Involved in water stress-induced cell death through its protease activity that is released to the cytoplasm after vacuolar collapse. Possesses protease activity in vitro and is involved in cell death in the transmitting tract and septum epidermis during flower development. Possesses peptide ligase activity. Can ligate peptides to unmodified N-termini of acceptor proteins. Probably ligates through a thioester intermediate. This is Cysteine proteinase RD21A from Arabidopsis thaliana (Mouse-ear cress).